A 1108-amino-acid chain; its full sequence is Retinal guanylyl cyclase 2 (1108 aa).

An N-terminal signal peptide occupies residues 1–50 (MFLGPWPFSRLLSWFAISSRLSGQHGLTSSKFLRYLCLLALLPLIWWGQA). Residues 51–465 (LPYKIGVIGP…QGKICQGGID (415 aa)) lie on the Extracellular side of the membrane. Cys-104 and Cys-132 are disulfide-bonded. A helical membrane pass occupies residues 466 to 490 (PALAMMVCFALLLALLSINGFAYFI). Over 491–1108 (RRRINKIQLI…AERQLVRNKP (618 aa)) the chain is Cytoplasmic. Residues 532-812 (FQIISEVQSG…DEIFNQFKTF (281 aa)) enclose the Protein kinase domain. Positions 884 to 1014 (TLYFSDIVGF…DTVNTASRME (131 aa)) constitute a Guanylate cyclase domain.

It belongs to the adenylyl cyclase class-4/guanylyl cyclase family. In terms of assembly, homodimer. Interacts with RD3; promotes the exit of GUCY2F from the endoplasmic reticulum and its trafficking to the photoreceptor outer segments. There are 9 conserved cysteine residues in sensory guanylate cyclases, 6 in the extracellular domain, which may be involved in intra- or interchain disulfide bonds. In terms of tissue distribution, expressed only in the eye.

It localises to the membrane. The protein resides in the photoreceptor outer segment membrane. It catalyses the reaction GTP = 3',5'-cyclic GMP + diphosphate. Its activity is regulated as follows. Activated by GUCA1B when free calcium ions concentration is low, and inhibited by GUCA1B when free calcium ions concentration is high. Inhibited by RD3. Functionally, responsible for the synthesis of cyclic GMP (cGMP) in rods and cones of photoreceptors. Plays an essential role in phototransduction, by mediating cGMP replenishment. May also participate in the trafficking of membrane-asociated proteins to the photoreceptor outer segment membrane. This chain is Retinal guanylyl cyclase 2 (Gucy2f), found in Rattus norvegicus (Rat).